Reading from the N-terminus, the 501-residue chain is Cytochrome P450 7A1 (501 aa).

Residues 4 to 24 (ISLLGGIVTAVCCCLWLLLGM) form a helical membrane-spanning segment. C441 serves as a coordination point for heme.

This sequence belongs to the cytochrome P450 family. Heme serves as cofactor.

The protein resides in the endoplasmic reticulum membrane. It localises to the microsome membrane. The catalysed reaction is cholesterol + reduced [NADPH--hemoprotein reductase] + O2 = 7alpha-hydroxycholesterol + oxidized [NADPH--hemoprotein reductase] + H2O + H(+). The enzyme catalyses 4beta-hydroxycholesterol + reduced [NADPH--hemoprotein reductase] + O2 = 4beta,7alpha-dihydroxycholesterol + oxidized [NADPH--hemoprotein reductase] + H2O + H(+). It catalyses the reaction lathosterol + reduced [NADPH--hemoprotein reductase] + O2 = 7alpha,8alpha-epoxy-5alpha-cholestan-3beta-ol + oxidized [NADPH--hemoprotein reductase] + H2O + H(+). It carries out the reaction lathosterol + reduced [NADPH--hemoprotein reductase] + O2 = 5alpha-cholestan-7-oxo-3beta-ol + oxidized [NADPH--hemoprotein reductase] + H2O + H(+). The catalysed reaction is 7-dehydrocholesterol + reduced [NADPH--hemoprotein reductase] + O2 = 7-oxocholesterol + oxidized [NADPH--hemoprotein reductase] + H2O + H(+). The enzyme catalyses (24S)-hydroxycholesterol + reduced [NADPH--hemoprotein reductase] + O2 = (24S)-7alpha-dihydroxycholesterol + oxidized [NADPH--hemoprotein reductase] + H2O + H(+). It catalyses the reaction (24R)-hydroxycholesterol + reduced [NADPH--hemoprotein reductase] + O2 = (24R)-7alpha-dihydroxycholesterol + oxidized [NADPH--hemoprotein reductase] + H2O + H(+). It participates in lipid metabolism; bile acid biosynthesis. Its pathway is steroid metabolism; cholesterol degradation. A cytochrome P450 monooxygenase involved in the metabolism of endogenous cholesterol and its oxygenated derivatives (oxysterols). Mechanistically, uses molecular oxygen inserting one oxygen atom into a substrate, and reducing the second into a water molecule, with two electrons provided by NADPH via cytochrome P450 reductase (CPR; NADPH-ferrihemoprotein reductase). Functions as a critical regulatory enzyme of bile acid biosynthesis and cholesterol homeostasis. Catalyzes the hydroxylation of carbon hydrogen bond at 7-alpha position of cholesterol, a rate-limiting step in cholesterol catabolism and bile acid biosynthesis. 7-alpha hydroxylates several oxysterols, including 4beta-hydroxycholesterol and 24-hydroxycholesterol. Catalyzes the oxidation of the 7,8 double bond of 7-dehydrocholesterol and lathosterol with direct and predominant formation of the 7-keto derivatives. The protein is Cytochrome P450 7A1 (CYP7A1) of Sus scrofa (Pig).